Consider the following 97-residue polypeptide: Small ribosomal subunit protein bS6 (97 aa).

Belongs to the bacterial ribosomal protein bS6 family.

Functionally, binds together with bS18 to 16S ribosomal RNA. This is Small ribosomal subunit protein bS6 from Limosilactobacillus fermentum (strain NBRC 3956 / LMG 18251) (Lactobacillus fermentum).